The primary structure comprises 298 residues: N-acetylmuramic acid 6-phosphate etherase (298 aa).

The 164-residue stretch at Ile57–Lys220 folds into the SIS domain. The active-site Proton donor is the Glu85. Residue Glu116 is part of the active site.

It belongs to the GCKR-like family. MurNAc-6-P etherase subfamily. In terms of assembly, homodimer.

It carries out the reaction N-acetyl-D-muramate 6-phosphate + H2O = N-acetyl-D-glucosamine 6-phosphate + (R)-lactate. Its pathway is amino-sugar metabolism; 1,6-anhydro-N-acetylmuramate degradation. It participates in amino-sugar metabolism; N-acetylmuramate degradation. It functions in the pathway cell wall biogenesis; peptidoglycan recycling. Functionally, specifically catalyzes the cleavage of the D-lactyl ether substituent of MurNAc 6-phosphate, producing GlcNAc 6-phosphate and D-lactate. Together with AnmK, is also required for the utilization of anhydro-N-acetylmuramic acid (anhMurNAc) either imported from the medium or derived from its own cell wall murein, and thus plays a role in cell wall recycling. In Aeromonas hydrophila subsp. hydrophila (strain ATCC 7966 / DSM 30187 / BCRC 13018 / CCUG 14551 / JCM 1027 / KCTC 2358 / NCIMB 9240 / NCTC 8049), this protein is N-acetylmuramic acid 6-phosphate etherase.